The sequence spans 125 residues: Small ribosomal subunit protein bS6 (125 aa).

Positions 100-125 (SPMVKAREERKPLTEVENNDFEDAEE) are disordered. Basic and acidic residues predominate over residues 104–113 (KAREERKPLT). Acidic residues predominate over residues 116–125 (ENNDFEDAEE).

It belongs to the bacterial ribosomal protein bS6 family.

Its function is as follows. Binds together with bS18 to 16S ribosomal RNA. This is Small ribosomal subunit protein bS6 from Histophilus somni (strain 129Pt) (Haemophilus somnus).